We begin with the raw amino-acid sequence, 261 residues long: Imidazole glycerol phosphate synthase subunit HisF (261 aa).

Catalysis depends on residues Asp-16 and Asp-135.

This sequence belongs to the HisA/HisF family. Heterodimer of HisH and HisF.

It is found in the cytoplasm. The enzyme catalyses 5-[(5-phospho-1-deoxy-D-ribulos-1-ylimino)methylamino]-1-(5-phospho-beta-D-ribosyl)imidazole-4-carboxamide + L-glutamine = D-erythro-1-(imidazol-4-yl)glycerol 3-phosphate + 5-amino-1-(5-phospho-beta-D-ribosyl)imidazole-4-carboxamide + L-glutamate + H(+). Its pathway is amino-acid biosynthesis; L-histidine biosynthesis; L-histidine from 5-phospho-alpha-D-ribose 1-diphosphate: step 5/9. Functionally, IGPS catalyzes the conversion of PRFAR and glutamine to IGP, AICAR and glutamate. The HisF subunit catalyzes the cyclization activity that produces IGP and AICAR from PRFAR using the ammonia provided by the HisH subunit. The sequence is that of Imidazole glycerol phosphate synthase subunit HisF from Mycobacterium leprae (strain Br4923).